A 340-amino-acid polypeptide reads, in one-letter code: Serpentine receptor class alpha-23 (340 aa).

A run of 6 helical transmembrane segments spans residues 34 to 54 (FIST…QALW), 114 to 136 (YFYY…DRLI), 150 to 170 (FIAI…FYIA), 199 to 219 (VRTV…YLSV), 250 to 270 (ILIV…NLLL), and 284 to 304 (VGAF…AIYF).

It belongs to the nematode receptor-like protein sra family.

The protein resides in the membrane. This Caenorhabditis elegans protein is Serpentine receptor class alpha-23 (sra-23).